A 517-amino-acid chain; its full sequence is MLVHGRRLGLLLGRSHVAAPKHTSHLPRRTVHLNHFVSKGEAASEAEPPQSTFTVAVKDNIATQAHPTTCASNILRDYTSPYEATVVRQLRRRGARVVGTTNLDEFGMGTHSTHSAHGPVASPAGRSAGGSSGGSAVAVAAGEVEVALGTDTGGSVRLPAAYNGVVGFKPSYGMLSRYGVVPYANSLDTVGLLARSVERIRDLVVGEGLWAQHDDKDPTSLSAAARLRCASGRTGYKGEAAKVGWEGLTFGIPLEYNIFELDPLIREAWEEVAALLQSLGANVVPVSLPTTRQALSAYYVLAPAEASSNLAKYDGVRYGNPGPESENEGGVLYSAARGAGFGDEVKRRILLGAYSLSSEAMDNYFVQAQKVRRLVRGDFDRVFLLDNPLVDKEPTEEGFGEEAEQADLADLHEDVPLLNKRGPARVDFILSPTAPTPAPTLDEALSQTSLDSATNDVFTVPASLAGLPAISLPVDMKEDVHGVGRFAGIQIIGQYWDDARLLDVAVALRGVLGRGLV.

Catalysis depends on charge relay system residues lysine 58 and serine 131. The tract at residues phenylalanine 106–serine 132 is disordered. Residue serine 155 is the Acyl-ester intermediate of the active site.

This sequence belongs to the amidase family. GatA subfamily. In terms of assembly, subunit of the heterotrimeric GatCAB amidotransferase (AdT) complex, composed of A, B and C subunits.

The protein resides in the mitochondrion. It catalyses the reaction L-glutamyl-tRNA(Gln) + L-glutamine + ATP + H2O = L-glutaminyl-tRNA(Gln) + L-glutamate + ADP + phosphate + H(+). Allows the formation of correctly charged Gln-tRNA(Gln) through the transamidation of misacylated Glu-tRNA(Gln) in the mitochondria. The reaction takes place in the presence of glutamine and ATP through an activated gamma-phospho-Glu-tRNA(Gln). This chain is Glutamyl-tRNA(Gln) amidotransferase subunit A, mitochondrial, found in Pyricularia oryzae (strain 70-15 / ATCC MYA-4617 / FGSC 8958) (Rice blast fungus).